We begin with the raw amino-acid sequence, 185 residues long: Elongation factor P (185 aa).

It belongs to the elongation factor P family.

The protein localises to the cytoplasm. It functions in the pathway protein biosynthesis; polypeptide chain elongation. Its function is as follows. Involved in peptide bond synthesis. Stimulates efficient translation and peptide-bond synthesis on native or reconstituted 70S ribosomes in vitro. Probably functions indirectly by altering the affinity of the ribosome for aminoacyl-tRNA, thus increasing their reactivity as acceptors for peptidyl transferase. This Thermotoga maritima (strain ATCC 43589 / DSM 3109 / JCM 10099 / NBRC 100826 / MSB8) protein is Elongation factor P (efp).